A 507-amino-acid polypeptide reads, in one-letter code: Rho GTPase-activating protein 19 (507 aa).

One can recognise a Rho-GAP domain in the interval Ala-112–Phe-305. Disordered stretches follow at residues Phe-344–Thr-371, Lys-400–Val-419, and Asp-483–Ile-507. Residues Ser-355–Gln-369 are compositionally biased toward low complexity. Residues Lys-400 to Pro-413 show a composition bias toward polar residues. Over residues Asp-483–Ser-492 the composition is skewed to basic and acidic residues.

Its function is as follows. GTPase activator for the Rho-type GTPases by converting them to an inactive GDP-bound state. This Xenopus laevis (African clawed frog) protein is Rho GTPase-activating protein 19 (arhgap19).